The following is a 472-amino-acid chain: Acetyl-CoA decarbonylase/synthase complex subunit beta 2 (472 aa).

[Ni-Fe-S] cluster-binding residues include C189, C192, C278, and C280.

The protein belongs to the CdhC family. Monomer. The ACDS complex is made up of alpha, epsilon, beta, gamma and delta chains with a probable stoichiometry of (alpha(2)epsilon(2))(4)-beta(8)-(gamma(1)delta(1))(8) (Potential). The cofactor is [Ni-Fe-S] cluster.

It catalyses the reaction Co(I)-[corrinoid Fe-S protein] + acetyl-CoA + H(+) = methyl-Co(III)-[corrinoid Fe-S protein] + CO + CoA. It functions in the pathway one-carbon metabolism; methanogenesis from acetate. Part of a complex that catalyzes the reversible cleavage of acetyl-CoA, allowing growth on acetate as sole source of carbon and energy. The alpha-epsilon complex generates CO from CO(2), while the beta subunit (this protein) combines the CO with CoA and a methyl group to form acetyl-CoA. The methyl group, which is incorporated into acetyl-CoA, is transferred to the beta subunit by a corrinoid iron-sulfur protein (the gamma-delta complex). In Methanosarcina thermophila, this protein is Acetyl-CoA decarbonylase/synthase complex subunit beta 2 (cdhC2).